Consider the following 234-residue polypeptide: N-acetyl-alpha-D-glucosaminyl L-malate deacetylase 1 (234 aa).

Zn(2+) contacts are provided by H12, D15, and H113.

It belongs to the PIGL family. As to quaternary structure, homohexamer. Trimer of dimers. Zn(2+) is required as a cofactor.

The catalysed reaction is (S)-malyl N-acetyl-alpha-D-glucosaminide + H2O = (S)-malyl alpha-D-glucosaminide + acetate. Functionally, involved in bacillithiol (BSH) biosynthesis. Catalyzes the second step of the pathway, the deacetylation of N-acetylglucosaminylmalate (GlcNAc-Mal) to glucosamine malate (GlcN-Mal). This chain is N-acetyl-alpha-D-glucosaminyl L-malate deacetylase 1, found in Bacillus cereus (strain ATCC 14579 / DSM 31 / CCUG 7414 / JCM 2152 / NBRC 15305 / NCIMB 9373 / NCTC 2599 / NRRL B-3711).